Reading from the N-terminus, the 87-residue chain is DNA-directed RNA polymerase subunit omega (87 aa).

It belongs to the RNA polymerase subunit omega family. In terms of assembly, the RNAP catalytic core consists of 2 alpha, 1 beta, 1 beta' and 1 omega subunit. When a sigma factor is associated with the core the holoenzyme is formed, which can initiate transcription.

It carries out the reaction RNA(n) + a ribonucleoside 5'-triphosphate = RNA(n+1) + diphosphate. Promotes RNA polymerase assembly. Latches the N- and C-terminal regions of the beta' subunit thereby facilitating its interaction with the beta and alpha subunits. This is DNA-directed RNA polymerase subunit omega from Pseudomonas putida (strain ATCC 700007 / DSM 6899 / JCM 31910 / BCRC 17059 / LMG 24140 / F1).